A 206-amino-acid polypeptide reads, in one-letter code: LexA repressor (206 aa).

Residues 28-48 (RAEIARRLGFKSANAAEEHLK) constitute a DNA-binding region (H-T-H motif). Active-site for autocatalytic cleavage activity residues include Ser-123 and Lys-160.

Belongs to the peptidase S24 family. Homodimer.

It catalyses the reaction Hydrolysis of Ala-|-Gly bond in repressor LexA.. In terms of biological role, represses a number of genes involved in the response to DNA damage (SOS response), including recA and lexA. In the presence of single-stranded DNA, RecA interacts with LexA causing an autocatalytic cleavage which disrupts the DNA-binding part of LexA, leading to derepression of the SOS regulon and eventually DNA repair. The sequence is that of LexA repressor from Shewanella piezotolerans (strain WP3 / JCM 13877).